A 344-amino-acid chain; its full sequence is Phenylalanine--tRNA ligase alpha subunit (344 aa).

E255 provides a ligand contact to Mg(2+).

The protein belongs to the class-II aminoacyl-tRNA synthetase family. Phe-tRNA synthetase alpha subunit type 1 subfamily. As to quaternary structure, tetramer of two alpha and two beta subunits. The cofactor is Mg(2+).

The protein localises to the cytoplasm. The enzyme catalyses tRNA(Phe) + L-phenylalanine + ATP = L-phenylalanyl-tRNA(Phe) + AMP + diphosphate + H(+). This chain is Phenylalanine--tRNA ligase alpha subunit, found in Phocaeicola vulgatus (strain ATCC 8482 / DSM 1447 / JCM 5826 / CCUG 4940 / NBRC 14291 / NCTC 11154) (Bacteroides vulgatus).